We begin with the raw amino-acid sequence, 237 residues long: Ribonuclease PH (237 aa).

Phosphate-binding positions include arginine 86 and glycine 124–arginine 126.

It belongs to the RNase PH family. Homohexameric ring arranged as a trimer of dimers.

The catalysed reaction is tRNA(n+1) + phosphate = tRNA(n) + a ribonucleoside 5'-diphosphate. Functionally, phosphorolytic 3'-5' exoribonuclease that plays an important role in tRNA 3'-end maturation. Removes nucleotide residues following the 3'-CCA terminus of tRNAs; can also add nucleotides to the ends of RNA molecules by using nucleoside diphosphates as substrates, but this may not be physiologically important. Probably plays a role in initiation of 16S rRNA degradation (leading to ribosome degradation) during starvation. The chain is Ribonuclease PH from Shewanella loihica (strain ATCC BAA-1088 / PV-4).